A 347-amino-acid polypeptide reads, in one-letter code: GMP reductase (347 aa).

Residue 108 to 131 (ADFQKTKDIMALTDDLIFICVDIA) coordinates NADP(+). The K(+) site is built by Gly181 and Gly183. Cys186 functions as the Thioimidate intermediate in the catalytic mechanism. 216-239 (IIGDGGCSCAGDVSKAFGGGADFV) contacts NADP(+).

Belongs to the IMPDH/GMPR family. GuaC type 1 subfamily. As to quaternary structure, homotetramer.

It carries out the reaction IMP + NH4(+) + NADP(+) = GMP + NADPH + 2 H(+). Catalyzes the irreversible NADPH-dependent deamination of GMP to IMP. It functions in the conversion of nucleobase, nucleoside and nucleotide derivatives of G to A nucleotides, and in maintaining the intracellular balance of A and G nucleotides. This is GMP reductase from Aliivibrio salmonicida (strain LFI1238) (Vibrio salmonicida (strain LFI1238)).